The following is a 552-amino-acid chain: Transcription factor kayak (552 aa).

Disordered stretches follow at residues 110–145 (LAQG…TDST) and 177–234 (GAAS…KRRV). Residues 111–127 (AQGSDSEDSNASYNDTQ) are compositionally biased toward polar residues. Over residues 135-145 (TDTSSAHTDST) the composition is skewed to low complexity. Positions 177–192 (GAASVGSSNANTSNTP) are enriched in polar residues. Residues 212-275 (EQKRAVRRER…NQLEYCLAAH (64 aa)) form the bZIP domain. The tract at residues 214–233 (KRAVRRERNKQAAARCRKRR) is basic motif. The leucine-zipper stretch occupies residues 240-247 (LTEEVEQL). The segment covering 304–325 (AGSSGSGASSHHNHNSNDSSNG) has biased composition (low complexity). Disordered regions lie at residues 304 to 346 (AGSS…PLDL), 365 to 390 (LDGA…TLPP), and 514 to 552 (GGTG…LVSL). Over residues 333 to 343 (TLNSTGRSNSP) the composition is skewed to polar residues. S342 is subject to Phosphoserine.

Belongs to the bZIP family. Fos subfamily. Homodimer. Heterodimer with Jra. The kay-Jra heterodimer binds more stably to the AP-1 site than either of the two proteins alone.

Its subcellular location is the nucleus. In terms of biological role, developmentally regulated transcription factor AP-1 binds and recognizes the enhancer DNA sequence: 5'-TGA[CG]TCA-3'. May play a role in the function or determination of a particular subset of cells in the developing embryo. It is able to carry out its function either independently of or in conjunction with Jra. The chain is Transcription factor kayak from Drosophila yakuba (Fruit fly).